The following is a 257-amino-acid chain: 3-methyl-2-oxobutanoate hydroxymethyltransferase (257 aa).

2 residues coordinate Mg(2+): D42 and D86. 3-methyl-2-oxobutanoate-binding positions include 42 to 43 (DS), D86, and K116. E118 provides a ligand contact to Mg(2+). E185 (proton acceptor) is an active-site residue.

The protein belongs to the PanB family. Homodecamer; pentamer of dimers. The cofactor is Mg(2+).

Its subcellular location is the cytoplasm. The enzyme catalyses 3-methyl-2-oxobutanoate + (6R)-5,10-methylene-5,6,7,8-tetrahydrofolate + H2O = 2-dehydropantoate + (6S)-5,6,7,8-tetrahydrofolate. It participates in cofactor biosynthesis; (R)-pantothenate biosynthesis; (R)-pantoate from 3-methyl-2-oxobutanoate: step 1/2. Functionally, catalyzes the reversible reaction in which hydroxymethyl group from 5,10-methylenetetrahydrofolate is transferred onto alpha-ketoisovalerate to form ketopantoate. The chain is 3-methyl-2-oxobutanoate hydroxymethyltransferase from Prochlorococcus marinus (strain MIT 9301).